A 936-amino-acid chain; its full sequence is DNA topoisomerase 1 (936 aa).

Residues 15 to 139 (RRLVIVESPT…VKRMVFHEIT (125 aa)) enclose the Toprim domain. Mg(2+)-binding residues include Glu21 and Asp108. One can recognise a Topo IA-type catalytic domain in the interval 154–611 (DIALVDAQET…FYFGGEHGVE (458 aa)). The interval 188–193 (SAGRVQ) is interaction with DNA. The active-site O-(5'-phospho-DNA)-tyrosine intermediate is Tyr339. Disordered stretches follow at residues 661-688 (LERM…LTPD), 732-767 (VLPE…SLFR), 841-884 (KRRG…ETNA), and 903-936 (LLAD…AKKA). Residues 910 to 936 (RGPVKKKAPAKKAAKKAPAKKAAAKKA) show a composition bias toward basic residues.

It belongs to the type IA topoisomerase family. As to quaternary structure, monomer. It depends on Mg(2+) as a cofactor.

It catalyses the reaction ATP-independent breakage of single-stranded DNA, followed by passage and rejoining.. In terms of biological role, releases the supercoiling and torsional tension of DNA, which is introduced during the DNA replication and transcription, by transiently cleaving and rejoining one strand of the DNA duplex. Introduces a single-strand break via transesterification at a target site in duplex DNA. The scissile phosphodiester is attacked by the catalytic tyrosine of the enzyme, resulting in the formation of a DNA-(5'-phosphotyrosyl)-enzyme intermediate and the expulsion of a 3'-OH DNA strand. The free DNA strand then undergoes passage around the unbroken strand, thus removing DNA supercoils. Finally, in the religation step, the DNA 3'-OH attacks the covalent intermediate to expel the active-site tyrosine and restore the DNA phosphodiester backbone. Functionally, relaxes negatively (but not positively) supercoiled DNA, concatanates and knots circular ssDNA at 52 but not 37 degrees Celsius. Preferentially nicks supercoiled DNA at C(G/T)CTT, cutting between the TT residues, binds ss and dsDNA with the recognition site. The chain is DNA topoisomerase 1 from Mycolicibacterium smegmatis (strain ATCC 700084 / mc(2)155) (Mycobacterium smegmatis).